The sequence spans 466 residues: MNNSTNSSNNGLAITSPYKTFEVVFIVLVAGSLSLVTIIGNILVMVSIKVNRHLQTVNNYFLFSLACADLIIGVFSMNLYTLYTVIGYWPLGPVVCDLWLALDYVVSNASVMNLLIISFDRYFCVTKPLTYPVKRTTKMAGMMIAAAWVLSFILWAPAILFWQFIVGVRTVEDGECYIQFFSNAAVTFGTAIAAFYLPVIIMTVLYWHISRASKSRIKKEKKEPVANQDPVSPSLVQGRIVKPNNNNMPGGDGGLEHNKIQNGKAPRDGGTENCVQGEEKESSNDSTSVSAVASNMRDDEITQDENTVSTSLGHSKDDNSRQTCIKIVTKTQKGDACTPTSTTVELVGSSGQNGDEKQNIVARKIVKMTKQPAKKKPPPSREKKVTRTILAILLAFIITWAPYNVMVLINTFCAPCIPNTVWTIGYWLCYINSTINPACYALCNATFKKTFKHLLMCHYKNIGATR.

The Extracellular segment spans residues 1–22 (MNNSTNSSNNGLAITSPYKTFE). N-linked (GlcNAc...) asparagine glycosylation is found at Asn-2, Asn-3, and Asn-6. Residues 23–45 (VVFIVLVAGSLSLVTIIGNILVM) form a helical membrane-spanning segment. Residues 46 to 59 (VSIKVNRHLQTVNN) lie on the Cytoplasmic side of the membrane. A helical transmembrane segment spans residues 60 to 80 (YFLFSLACADLIIGVFSMNLY). The Extracellular portion of the chain corresponds to 81-97 (TLYTVIGYWPLGPVVCD). The cysteines at positions 96 and 176 are disulfide-linked. The chain crosses the membrane as a helical span at residues 98–119 (LWLALDYVVSNASVMNLLIISF). The Important for signaling signature appears at 120–122 (DRY). Residues 120–139 (DRYFCVTKPLTYPVKRTTKM) lie on the Cytoplasmic side of the membrane. The chain crosses the membrane as a helical span at residues 140–162 (AGMMIAAAWVLSFILWAPAILFW). Topologically, residues 163-184 (QFIVGVRTVEDGECYIQFFSNA) are extracellular. Residues 185 to 209 (AVTFGTAIAAFYLPVIIMTVLYWHI) traverse the membrane as a helical segment. The Cytoplasmic segment spans residues 210–387 (SRASKSRIKK…PPSREKKVTR (178 aa)). The tract at residues 218 to 320 (KKEKKEPVAN…SLGHSKDDNS (103 aa)) is disordered. The residue at position 232 (Ser-232) is a Phosphoserine. Basic and acidic residues predominate over residues 254–270 (GLEHNKIQNGKAPRDGG). Composition is skewed to polar residues over residues 284-293 (NDSTSVSAVA) and 304-313 (DENTVSTSLG). A helical membrane pass occupies residues 388–410 (TILAILLAFIITWAPYNVMVLIN). Residues 411-418 (TFCAPCIP) are Extracellular-facing. Cys-413 and Cys-416 are disulfide-bonded. The helical transmembrane segment at 419-442 (NTVWTIGYWLCYINSTINPACYAL) threads the bilayer. An Important for signaling motif is present at residues 436 to 440 (NPACY). Residues 443 to 466 (CNATFKKTFKHLLMCHYKNIGATR) are Cytoplasmic-facing. Residues Thr-446, Thr-450, and Thr-465 each carry the phosphothreonine modification.

The protein belongs to the G-protein coupled receptor 1 family. Muscarinic acetylcholine receptor subfamily. CHRM2 sub-subfamily. Interacts with ARRB1 and ARRB2. Interacts with RACK1; the interaction regulates CHRM2 internalization. Post-translationally, phosphorylated in response to agonist treatment.

The protein localises to the cell membrane. It is found in the postsynaptic cell membrane. Its function is as follows. The muscarinic acetylcholine receptor mediates various cellular responses, including inhibition of adenylate cyclase, breakdown of phosphoinositides and modulation of potassium channels through the action of G proteins. Primary transducing effect is adenylate cyclase inhibition. Signaling promotes phospholipase C activity, leading to the release of inositol trisphosphate (IP3); this then triggers calcium ion release into the cytosol. This Mus musculus (Mouse) protein is Muscarinic acetylcholine receptor M2 (Chrm2).